Consider the following 294-residue polypeptide: Large ribosomal subunit protein uL2c (294 aa).

Positions 224–249 (VMNPVDHPHGGGGEGKSPIGRSRPVT) are disordered.

The protein belongs to the universal ribosomal protein uL2 family. Part of the 50S ribosomal subunit.

It localises to the plastid. Its subcellular location is the chloroplast. The chain is Large ribosomal subunit protein uL2c (rpl2) from Porphyra purpurea (Red seaweed).